Consider the following 240-residue polypeptide: Izumo sperm-egg fusion protein 3 (240 aa).

The signal sequence occupies residues 1 to 22 (MGDLWLLLLLPLSLAAFHGVKG). The Extracellular portion of the chain corresponds to 23–176 (CLECDPKFIE…DDPKKAESRE (154 aa)). A helical transmembrane segment spans residues 177-197 (IGLFLILLAEGVILGGVLLLF). At 198-240 (HFCISHQRKMKAIRRSLKTYLEKKLEELMGIKDEKEKDFRGRE) the chain is on the cytoplasmic side.

It belongs to the Izumo family. Monomer and homodimer.

The protein resides in the cell membrane. The sequence is that of Izumo sperm-egg fusion protein 3 (IZUMO3) from Bos taurus (Bovine).